The following is a 290-amino-acid chain: Arylamine N-acetyltransferase 2 (290 aa).

Cys-68 (acyl-thioester intermediate) is an active-site residue. 2 residues coordinate CoA: Thr-103 and Gly-104. Val-106–His-107 serves as a coordination point for substrate. Catalysis depends on residues His-107 and Asp-122. CoA-binding residues include Tyr-208, Thr-214, and Ser-287.

Belongs to the arylamine N-acetyltransferase family.

The protein localises to the cytoplasm. It carries out the reaction an arylamine + acetyl-CoA = an N-acetylarylamine + CoA. The enzyme catalyses an N-hydroxyarylamine + acetyl-CoA = an N-acetoxyarylamine + CoA. Functionally, catalyzes the N- or O-acetylation of various arylamine and heterocyclic amine substrates. Participates in the detoxification of a plethora of hydrazine and arylamine drugs, and is able to bioactivate several known carcinogens. The polypeptide is Arylamine N-acetyltransferase 2 (NAT2) (Homo sapiens (Human)).